The sequence spans 407 residues: E3 ubiquitin-protein ligase TRIM13 (407 aa).

The segment at 10–58 (CPICCSLFDDPRVLPCSHNFCKKCLEGLLEGNVRNSLWRPSPFKCPTCR) adopts an RING-type zinc-finger fold. The segment at 89-131 (PKMPVCKGHLGQPLNIFCVTDMQLICGICATRGEHTKHVFSSI) adopts a B box-type zinc-finger fold. Positions 94, 97, 117, and 123 each coordinate Zn(2+). Residues 172–200 (LQLLTKDSDKVKEFFEKLQHTLDQKKNEI) are a coiled coil. A helical membrane pass occupies residues 316–336 (LLLMMVVLLGLLIFFGPTVFL).

Belongs to the TRIM/RBCC family. In terms of assembly, interacts (via C-terminal domain) with VCP. Interacts with AKT1; the interaction ubiquitinates AKT1 and leads to its proteasomal degradation. Interacts with MDM2; the interaction ubiquitinates AKT1 and leads to its proteasomal degradation. Interacts with p62/SQSTM1. Interacts with TRAF6. Interacts with IKBKG/NEMO. Post-translationally, auto-ubiquitinated; requires the RING-type zinc finger. Auto-polyubiquitination leads to proteasomal degradation.

It localises to the endoplasmic reticulum membrane. The catalysed reaction is S-ubiquitinyl-[E2 ubiquitin-conjugating enzyme]-L-cysteine + [acceptor protein]-L-lysine = [E2 ubiquitin-conjugating enzyme]-L-cysteine + N(6)-ubiquitinyl-[acceptor protein]-L-lysine.. Its pathway is protein modification; protein ubiquitination. Functionally, endoplasmic reticulum (ER) membrane anchored E3 ligase involved in the retrotranslocation and turnover of membrane and secretory proteins from the ER through a set of processes named ER-associated degradation (ERAD). This process acts on misfolded proteins as well as in the regulated degradation of correctly folded proteins. Enhances ionizing radiation-induced p53/TP53 stability and apoptosis via ubiquitinating MDM2 and AKT1 and decreasing AKT1 kinase activity through MDM2 and AKT1 proteasomal degradation. Regulates ER stress-induced autophagy, and may act as a tumor suppressor. Also plays a role in innate immune response by stimulating NF-kappa-B activity in the TLR2 signaling pathway. Ubiquitinates TRAF6 via the 'Lys-29'-linked polyubiquitination chain resulting in NF-kappa-B activation. Participates as well in T-cell receptor-mediated NF-kappa-B activation. In the presence of TNF, modulates the IKK complex by regulating IKBKG/NEMO ubiquitination leading to the repression of NF-kappa-B. The chain is E3 ubiquitin-protein ligase TRIM13 (Trim13) from Mus musculus (Mouse).